A 344-amino-acid polypeptide reads, in one-letter code: tRNA N6-adenosine threonylcarbamoyltransferase (344 aa).

Fe cation-binding residues include His-111 and His-115. Substrate is bound by residues 134–138 (LVSGG), Asp-167, Gly-180, and Asn-274. A Fe cation-binding site is contributed by Asp-302.

The protein belongs to the KAE1 / TsaD family. It depends on Fe(2+) as a cofactor.

The protein resides in the cytoplasm. The catalysed reaction is L-threonylcarbamoyladenylate + adenosine(37) in tRNA = N(6)-L-threonylcarbamoyladenosine(37) in tRNA + AMP + H(+). In terms of biological role, required for the formation of a threonylcarbamoyl group on adenosine at position 37 (t(6)A37) in tRNAs that read codons beginning with adenine. Is involved in the transfer of the threonylcarbamoyl moiety of threonylcarbamoyl-AMP (TC-AMP) to the N6 group of A37, together with TsaE and TsaB. TsaD likely plays a direct catalytic role in this reaction. The polypeptide is tRNA N6-adenosine threonylcarbamoyltransferase (Dechloromonas aromatica (strain RCB)).